A 456-amino-acid chain; its full sequence is ATP synthase subunit beta 1 (456 aa).

152–159 (GGAGVGKS) serves as a coordination point for ATP.

This sequence belongs to the ATPase alpha/beta chains family. As to quaternary structure, F-type ATPases have 2 components, CF(1) - the catalytic core - and CF(0) - the membrane proton channel. CF(1) has five subunits: alpha(3), beta(3), gamma(1), delta(1), epsilon(1). CF(0) has three main subunits: a(1), b(2) and c(9-12). The alpha and beta chains form an alternating ring which encloses part of the gamma chain. CF(1) is attached to CF(0) by a central stalk formed by the gamma and epsilon chains, while a peripheral stalk is formed by the delta and b chains.

The protein resides in the cell membrane. It carries out the reaction ATP + H2O + 4 H(+)(in) = ADP + phosphate + 5 H(+)(out). Produces ATP from ADP in the presence of a proton gradient across the membrane. The catalytic sites are hosted primarily by the beta subunits. The sequence is that of ATP synthase subunit beta 1 from Listeria monocytogenes serovar 1/2a (strain ATCC BAA-679 / EGD-e).